The primary structure comprises 443 residues: CBL-interacting protein kinase 2 (443 aa).

A Protein kinase domain is found at 13–267 (YEMGKLLGQG…MDKIMENPWF (255 aa)). ATP contacts are provided by residues 19-27 (LGQGTFAKV) and lysine 42. The active-site Proton acceptor is aspartate 135. The interval 153 to 182 (DFGLSALADCKRQDGLLHTTCGTPAYVAPE) is activation loop. Positions 302 to 329 (TLEKKPSNLNAFDIISLSTGLDLSGMFE) constitute an NAF domain. The PPI stretch occupies residues 333–362 (KKESKFTSTSTASTIISKIEDIAKGLRLKL).

It belongs to the protein kinase superfamily. CAMK Ser/Thr protein kinase family. SNF1 subfamily. Requires Mn(2+) as cofactor.

The catalysed reaction is L-seryl-[protein] + ATP = O-phospho-L-seryl-[protein] + ADP + H(+). It carries out the reaction L-threonyl-[protein] + ATP = O-phospho-L-threonyl-[protein] + ADP + H(+). Functionally, CIPK serine-threonine protein kinases interact with CBL proteins. Binding of a CBL protein to the regulatory NAF domain of CIPK protein lead to the activation of the kinase in a calcium-dependent manner. The protein is CBL-interacting protein kinase 2 (CIPK2) of Oryza sativa subsp. japonica (Rice).